Here is a 469-residue protein sequence, read N- to C-terminus: MSAVNTPAGFTDYKVADISLAAWGRRETIIAESEMPALMGLRRKYLAEQPLKGAKILGCIHMTIQTAVLIETLVALGAEVRWSSCNIFSTQDQAAASIAAAGIPVFAWKGETEEEYEWCLEQTILKDGKPWDANMILDDGGDLTQLLHDKYPQVLDRVHGVTEETTTGVHRLLDMLAKGELKVPAINVNDSVTKSKNDNKYGCRHSLNDAIKRGTDHLLSGKQALVIGYGDVGKGSAQSLRQEGMIVKVSEVDPICAMQACMDGFELVSPFIDGINHGTEASIDKALLGKIDLIVTTTGNVNVCDANMLKALKKRAVVCNIGHFDNEIDTAFMRKNWAWEEVKPQVHKIHRTGPGDFDAQNDDYLILLAEGRLVNLGNATGHPSRIMDGSFANQVLAQIFLFGQKYADLSPAQKAERLTVEVLPKKLDEEVALEMVRGFGGVVTQLTKQQAEYIGVTVEGPFKPDAYRY.

Substrate contacts are provided by threonine 63, aspartate 139, and glutamate 164. 165-167 is an NAD(+) binding site; the sequence is TTT. Substrate contacts are provided by lysine 194 and aspartate 198. NAD(+) is bound by residues asparagine 199, 228-233, glutamate 251, asparagine 300, 321-323, and asparagine 375; these read GYGDVG and IGH.

The protein belongs to the adenosylhomocysteinase family. NAD(+) serves as cofactor.

It is found in the cytoplasm. The catalysed reaction is S-adenosyl-L-homocysteine + H2O = L-homocysteine + adenosine. Its pathway is amino-acid biosynthesis; L-homocysteine biosynthesis; L-homocysteine from S-adenosyl-L-homocysteine: step 1/1. Functionally, may play a key role in the regulation of the intracellular concentration of adenosylhomocysteine. The sequence is that of Adenosylhomocysteinase from Pseudomonas fluorescens (strain ATCC BAA-477 / NRRL B-23932 / Pf-5).